We begin with the raw amino-acid sequence, 269 residues long: Zinc finger protein SNAI2 (269 aa).

The SNAG domain stretch occupies residues 1–20 (MPRSFLVKKHFNASKKPNYS). The segment at 81–117 (SSSLGRVSPPPSSDTSSKDHSGSESPISDEEERLQPK) is disordered. 4 C2H2-type zinc fingers span residues 129 to 151 (FQCNLCNKTYSTFSGLAKHKQLH), 160 to 182 (FSCKYCDKEYVSLGALKMHIRTH), 186 to 208 (CVCKICGKAFSRPWLLQGHIRTH), and 214 to 236 (FSCPHCNRAFADRSNLRAHLQTH). The C2H2-type 5; atypical zinc-finger motif lies at 242-265 (YQCKNCSKTFSRMSLLHKHEESGC).

It belongs to the snail C2H2-type zinc-finger protein family. Interacts (via SNAG domain) with LIMD1 (via LIM domains), WTIP (via LIM domains) and AJUBA (via LIM domains). Interacts (via zinc fingers) with KPNA2, KPNB1, and TNPO1. May interact (via zinc fingers) with IPO7. In terms of processing, phosphorylated by GSK3B. Once phosphorylated, it becomes a target for ubiquitination. Post-translationally, ubiquitinated by the SCF(FBXO11) complex; ubiquitination requires previous GSK3B-mediated SNAI2 phosphorylation.

The protein resides in the nucleus. It localises to the cytoplasm. Transcriptional repressor that modulates both activator-dependent and basal transcription. Involved in the generation and migration of neural crest cells. Plays a role in mediating RAF1-induced transcriptional repression of the TJ protein, occludin (OCLN) and subsequent oncogenic transformation of epithelial cells. Represses BRCA2 expression by binding to its E2-box-containing silencer and recruiting CTBP1 and HDAC1 in breast cells. In epidermal keratinocytes, binds to the E-box in ITGA3 promoter and represses its transcription. Involved in the regulation of ITGB1 and ITGB4 expression and cell adhesion and proliferation in epidermal keratinocytes. Binds to E-box2 domain of BSG and activates its expression during TGFB1-induced epithelial-mesenchymal transition (EMT) in hepatocytes. Represses E-Cadherin/CDH1 transcription via E-box elements. Involved in osteoblast maturation. Binds to RUNX2 and SOC9 promoters and may act as a positive and negative transcription regulator, respectively, in osteoblasts. Binds to CXCL12 promoter via E-box regions in mesenchymal stem cells and osteoblasts. Plays an essential role in TWIST1-induced EMT and its ability to promote invasion and metastasis. The chain is Zinc finger protein SNAI2 (Snai2) from Mus musculus (Mouse).